The sequence spans 345 residues: Magnesium-chelatase 38 kDa subunit (345 aa).

Position 35-42 (35-42 (GDRGTGKS)) interacts with ATP.

This sequence belongs to the Mg-chelatase subunits D/I family.

It catalyses the reaction protoporphyrin IX + Mg(2+) + ATP + H2O = Mg-protoporphyrin IX + ADP + phosphate + 3 H(+). It functions in the pathway porphyrin-containing compound metabolism; bacteriochlorophyll biosynthesis. Its function is as follows. Involved in bacteriochlorophyll biosynthesis; introduces a magnesium ion into protoporphyrin IX to yield Mg-protoporphyrin IX. The polypeptide is Magnesium-chelatase 38 kDa subunit (bchI) (Acidiphilium rubrum).